We begin with the raw amino-acid sequence, 189 residues long: Putative biopolymer transport protein ExbB-like 1 (189 aa).

3 helical membrane passes run 14-34, 99-119, and 147-167; these read FVTT…LWVF, LVVL…GTVV, and LIAT…YLIL.

Belongs to the ExbB/TolQ family.

The protein resides in the cell inner membrane. This is Putative biopolymer transport protein ExbB-like 1 from Helicobacter pylori (strain J99 / ATCC 700824) (Campylobacter pylori J99).